We begin with the raw amino-acid sequence, 447 residues long: Cellulosome-anchoring protein (447 aa).

Positions 1-29 are cleaved as a signal peptide; sequence MKRIKRILAVLTIFALLATINAFTFVSLA. Residues 30–180 form the Cohesin domain; that stretch reads QTNTIEIIIG…EIIEASAPEA (151 aa). The segment at 30 to 180 is receptor binding site for duplicated segment of CipA; it reads QTNTIEIIIG…EIIEASAPEA (151 aa). A disordered region spans residues 177–247; sequence APEATPTPGS…EHAPFLKGYP (71 aa). A compositionally biased stretch (gly residues) spans 188-200; that stretch reads AGSGAGGGTGSSG. The span at 201 to 223 shows a compositional bias: low complexity; it reads SGQPSATPTPTATEKPSTTPKTT. SLH domains are found at residues 216-280, 281-344, and 345-408; these read PSTT…AGKN, SSIT…EQGT, and DVKT…GAVL. The region spanning 409–429 is the SLH 4; truncated domain; that stretch reads EFTDVPVNYWAYKDIAEGVIY.

The protein resides in the secreted. Its subcellular location is the cell wall. It is found in the S-layer. In terms of biological role, anchors the cellulosome to the cell surface by binding the duplicated segment that is present at the C-terminal end of CipA. The protein is Cellulosome-anchoring protein (ancA) of Acetivibrio thermocellus (strain ATCC 27405 / DSM 1237 / JCM 9322 / NBRC 103400 / NCIMB 10682 / NRRL B-4536 / VPI 7372) (Clostridium thermocellum).